A 214-amino-acid polypeptide reads, in one-letter code: Adenylate kinase (214 aa).

G10 to T15 contributes to the ATP binding site. The NMP stretch occupies residues S30–V59. Residues T31, R36, K57–V59, G85–R88, and Q92 contribute to the AMP site. The interval G122 to D159 is LID. ATP-binding positions include R123 and T132 to Y133. 2 residues coordinate AMP: R156 and R167. An ATP-binding site is contributed by K200.

Belongs to the adenylate kinase family. As to quaternary structure, monomer.

Its subcellular location is the cytoplasm. The enzyme catalyses AMP + ATP = 2 ADP. It participates in purine metabolism; AMP biosynthesis via salvage pathway; AMP from ADP: step 1/1. In terms of biological role, catalyzes the reversible transfer of the terminal phosphate group between ATP and AMP. Plays an important role in cellular energy homeostasis and in adenine nucleotide metabolism. The sequence is that of Adenylate kinase from Actinobacillus pleuropneumoniae serotype 5b (strain L20).